A 76-amino-acid polypeptide reads, in one-letter code: UPF0248 protein MMP0286 (76 aa).

Belongs to the UPF0248 family.

This chain is UPF0248 protein MMP0286, found in Methanococcus maripaludis (strain DSM 14266 / JCM 13030 / NBRC 101832 / S2 / LL).